A 333-amino-acid polypeptide reads, in one-letter code: Adenosine deaminase (333 aa).

His-12 and His-14 together coordinate Zn(2+). Residues His-14, Asp-16, and Gly-170 each coordinate substrate. A Zn(2+)-binding site is contributed by His-197. Glu-200 functions as the Proton donor in the catalytic mechanism. Asp-278 contributes to the Zn(2+) binding site. Asp-279 is a binding site for substrate.

The protein belongs to the metallo-dependent hydrolases superfamily. Adenosine and AMP deaminases family. Adenosine deaminase subfamily. Zn(2+) is required as a cofactor.

It carries out the reaction adenosine + H2O + H(+) = inosine + NH4(+). The catalysed reaction is 2'-deoxyadenosine + H2O + H(+) = 2'-deoxyinosine + NH4(+). In terms of biological role, catalyzes the hydrolytic deamination of adenosine and 2-deoxyadenosine. This chain is Adenosine deaminase, found in Salmonella agona (strain SL483).